The sequence spans 432 residues: Serine/threonine-protein phosphatase 2A activator 1 (432 aa).

It belongs to the PTPA-type PPIase family.

It is found in the cytoplasm. Its subcellular location is the nucleus. It catalyses the reaction [protein]-peptidylproline (omega=180) = [protein]-peptidylproline (omega=0). In terms of biological role, PPIases accelerate the folding of proteins. It catalyzes the cis-trans isomerization of proline imidic peptide bonds in oligopeptides. Acts as a regulatory subunit for PP2A-like phosphatases modulating their activity or substrate specificity, probably by inducing a conformational change in the catalytic subunit, a direct target of the PPIase. Can reactivate inactive phosphatase PP2A-phosphatase methylesterase complexes (PP2Ai) in presence of ATP and Mg(2+) by dissociating the inactive form from the complex. This Emericella nidulans (strain FGSC A4 / ATCC 38163 / CBS 112.46 / NRRL 194 / M139) (Aspergillus nidulans) protein is Serine/threonine-protein phosphatase 2A activator 1 (rrd1).